A 400-amino-acid chain; its full sequence is Aspartate/prephenate aminotransferase (400 aa).

Positions 39, 125, and 175 each coordinate L-aspartate. Lysine 239 bears the N6-(pyridoxal phosphate)lysine mark. Arginine 375 contacts L-aspartate.

It belongs to the class-I pyridoxal-phosphate-dependent aminotransferase family. In terms of assembly, homodimer. Pyridoxal 5'-phosphate serves as cofactor.

Its subcellular location is the cytoplasm. The enzyme catalyses L-aspartate + 2-oxoglutarate = oxaloacetate + L-glutamate. It carries out the reaction L-arogenate + 2-oxoglutarate = prephenate + L-glutamate. Catalyzes the reversible conversion of aspartate and 2-oxoglutarate to glutamate and oxaloacetate. Can also transaminate prephenate in the presence of glutamate. The polypeptide is Aspartate/prephenate aminotransferase (Cereibacter sphaeroides (strain ATCC 17029 / ATH 2.4.9) (Rhodobacter sphaeroides)).